The following is a 397-amino-acid chain: F-box protein At3g28330 (397 aa).

The 51-residue stretch at 6-56 folds into the F-box domain; sequence KKDMDFLTEDLWEIILARLPLKSIITTPKLVCKVWKSIIESRCFRDLFQSL.

In Arabidopsis thaliana (Mouse-ear cress), this protein is F-box protein At3g28330.